Consider the following 915-residue polypeptide: MEIPKTGVETLYPEFVVEVGRVTFGEENRKKMTNSCLKRTENLNIIKATCALLNSGGGVIKAEIHDKNYNYQCHGLGHDLETSFQKLLPFGSQKYLDYMQQGHELLIFVKSWNPDVSSLLPLRICSLRSNLYQRDVTSAINLSASSALELLREKQHAAQRGRRRLHPPRASNSNLQEEEDMKMLASEVFKKDRLMYKEKLNFTESTHVEFKRFTTKKVVPRIKEMLPHYVSAFANTQGGYLIIGVDDKSKEVFGCKKEKVNPDLLKKEIENCIEKLPTFHFCHEKPKINFITKILNVYQKDVLYGYVCVVQVEPFCCAVFAEAPDSWVMRDNAATRLTAEDWVLMMLDIPSAPCNLVTDSNAHLKSPASSAFRSPVCPTKVLEFKGALQRHLFPVTQKTIQFKPESFCKKLFSDHKGLEDLMKTQTYPYSQGIVVFSRSWAGDVGLRKEDRVLCDALLIALHSPLVLYTVLIDPSWAGGREYAWNVALHLKRKLQSVGGYPGKVGIIPRLIQLAGTWCGPGDGSVHYPQSYQLATEDDMEDLLQALVVVSLCSRSLLSDQLGCEFFNLLIAEQCEVLSQSLQETRELFIHCFPGTRKTALAIKTLEKIRDLFRCRPKEILYVCESDFLRDFVIHQTACLAVTRKTFMQGEFPKIKHIVMDETENFCSKYGDWYSKARSITHPRVRGAGNEDLHHGILWIFLDPFQVRHSDVNGLPPPPAQFPRKTITNGIHCAQEIAKVMKGAMKRITENPPSNMSPHTLALFREAACGEALGAHALPGVCETKADLTVEQIANYVAERCHGLFQCGYLPKDVAILCRREEDRARYKLALLRAMELTETHSATEVVFSQAAGVQGEHIILDSVHQFSGLHRNIVFGLSPEQRLSEEFHQLCFASKAIKHLYLLYERGQVSENYYK.

Basic residues predominate over residues 157 to 167 (AAQRGRRRLHP). The segment at 157–176 (AAQRGRRRLHPPRASNSNLQ) is disordered. Residues 204–389 (ESTHVEFKRF…KVLEFKGALQ (186 aa)) form a required for endoribonuclease activity region. The segment at 390-569 (RHLFPVTQKT…QLGCEFFNLL (180 aa)) is required for ribosome binding.

In terms of assembly, associates with ribosomes in an ATP-independent manner. Requires Mg(2+) as cofactor. Mn(2+) serves as cofactor. Detected in reticulocytes (at protein level).

The protein resides in the nucleus. Shows no ribosome-associated and endoribonuclease activities. In terms of biological role, displays polysome-associated endoribonuclease activity towards mRNAs and rRNAs. May play a role in RNA surveillance pathways by recognizing stalled ribosomes and triggering endonucleolytic cleavage of aberrant mRNAs. Cleaves RNAs in a magnesium-, manganese-dependent and ATP-independent manner. Involved in correct maturation of megakaryocytes and especially important for proplatelet extension. The sequence is that of Protein SLFN14 from Oryctolagus cuniculus (Rabbit).